We begin with the raw amino-acid sequence, 266 residues long: 3-methyl-2-oxobutanoate hydroxymethyltransferase (266 aa).

2 residues coordinate Mg(2+): D45 and D84. Residues 45–46 (DS), D84, and K112 each bind 3-methyl-2-oxobutanoate. E114 lines the Mg(2+) pocket. E181 (proton acceptor) is an active-site residue.

Belongs to the PanB family. Homodecamer; pentamer of dimers. Requires Mg(2+) as cofactor.

It localises to the cytoplasm. The enzyme catalyses 3-methyl-2-oxobutanoate + (6R)-5,10-methylene-5,6,7,8-tetrahydrofolate + H2O = 2-dehydropantoate + (6S)-5,6,7,8-tetrahydrofolate. The protein operates within cofactor biosynthesis; (R)-pantothenate biosynthesis; (R)-pantoate from 3-methyl-2-oxobutanoate: step 1/2. Its function is as follows. Catalyzes the reversible reaction in which hydroxymethyl group from 5,10-methylenetetrahydrofolate is transferred onto alpha-ketoisovalerate to form ketopantoate. The sequence is that of 3-methyl-2-oxobutanoate hydroxymethyltransferase from Pseudomonas syringae pv. syringae (strain B728a).